Consider the following 127-residue polypeptide: Evasin P467 (127 aa).

The N-terminal stretch at methionine 1–glycine 21 is a signal peptide. Disulfide bonds link cysteine 42–cysteine 63, cysteine 59–cysteine 100, cysteine 76–cysteine 105, and cysteine 95–cysteine 114. Residues asparagine 49 and asparagine 94 are each glycosylated (N-linked (GlcNAc...) asparagine).

The protein resides in the secreted. Its function is as follows. Salivary chemokine-binding protein which binds to host chemokines CCL1, CCL2, CCL3 and CCL5. The chain is Evasin P467 from Rhipicephalus pulchellus (Yellow backed tick).